The following is a 188-amino-acid chain: RNA 2',3'-cyclic phosphodiesterase (188 aa).

His-42 acts as the Proton donor in catalysis. 2 consecutive short sequence motifs (HXTX) follow at residues 42 to 45 (HMTL) and 130 to 133 (HVTI). The active-site Proton acceptor is His-130.

Belongs to the 2H phosphoesterase superfamily. ThpR family.

The enzyme catalyses a 3'-end 2',3'-cyclophospho-ribonucleotide-RNA + H2O = a 3'-end 2'-phospho-ribonucleotide-RNA + H(+). Hydrolyzes RNA 2',3'-cyclic phosphodiester to an RNA 2'-phosphomonoester. This chain is RNA 2',3'-cyclic phosphodiesterase, found in Aquifex aeolicus (strain VF5).